A 223-amino-acid chain; its full sequence is Endonuclease NucS (223 aa).

The protein belongs to the NucS endonuclease family.

It localises to the cytoplasm. Functionally, cleaves both 3' and 5' ssDNA extremities of branched DNA structures. This is Endonuclease NucS from Streptomyces griseus subsp. griseus (strain JCM 4626 / CBS 651.72 / NBRC 13350 / KCC S-0626 / ISP 5235).